A 105-amino-acid chain; its full sequence is U-scoloptoxin(05)-Ssd1a (105 aa).

The first 24 residues, 1-24 (MKEAVKMSCLCIFVFLFLFSLTDA), serve as a signal peptide directing secretion. A disordered region spans residues 79–105 (HVPESNQKDGKVSTHMSSCNTDGCNAN). Residues 92 to 105 (THMSSCNTDGCNAN) are compositionally biased toward polar residues.

This sequence belongs to the scoloptoxin-05 family. Post-translationally, contains 4 disulfide bonds. As to expression, expressed by the venom gland.

The protein resides in the secreted. This is U-scoloptoxin(05)-Ssd1a from Scolopendra dehaani (Thai centipede).